The primary structure comprises 196 residues: Protein GrpE (196 aa).

The segment at 1-39 (MSSKEQKTPEGQAPEEIIMDQHEEIEAVEPEASAEQVDP) is disordered.

It belongs to the GrpE family. In terms of assembly, homodimer.

It is found in the cytoplasm. Participates actively in the response to hyperosmotic and heat shock by preventing the aggregation of stress-denatured proteins, in association with DnaK and GrpE. It is the nucleotide exchange factor for DnaK and may function as a thermosensor. Unfolded proteins bind initially to DnaJ; upon interaction with the DnaJ-bound protein, DnaK hydrolyzes its bound ATP, resulting in the formation of a stable complex. GrpE releases ADP from DnaK; ATP binding to DnaK triggers the release of the substrate protein, thus completing the reaction cycle. Several rounds of ATP-dependent interactions between DnaJ, DnaK and GrpE are required for fully efficient folding. The sequence is that of Protein GrpE from Escherichia coli O139:H28 (strain E24377A / ETEC).